We begin with the raw amino-acid sequence, 263 residues long: MAPK-interacting and spindle-stabilizing protein (263 aa).

The segment at 13–238 (GSPAPFLPSG…LGKQQGHNTT (226 aa)) is disordered. 2 stretches are compositionally biased toward pro residues: residues 14 to 34 (SPAPFLPSGPSCPQPSGPYPG) and 140 to 155 (GLQPSPNNPYPLPPGP). A compositionally biased stretch (low complexity) spans 156-165 (SAASPGPGSL). Over residues 176-189 (PSDSSNPESTLEST) the composition is skewed to polar residues. A compositionally biased stretch (basic residues) spans 202 to 213 (IKRRRSKKKSKR).

This sequence belongs to the MISS family. In terms of assembly, interacts with MAPK1. Phosphorylated in vitro by MAPK1.

It localises to the cytoplasm. Its subcellular location is the cytoskeleton. It is found in the spindle. In terms of biological role, involved in the maintenance of the spindle integrity during the cytostatic factor (CSF) arrest of oocytes. This chain is MAPK-interacting and spindle-stabilizing protein (Mapk1ip1), found in Mus musculus (Mouse).